The primary structure comprises 418 residues: Tyrosine--tRNA ligase 1 (418 aa).

An L-tyrosine-binding site is contributed by Tyr34. Residues 39-48 (PTGDSMHIGH) carry the 'HIGH' region motif. 2 residues coordinate L-tyrosine: Tyr166 and Gln170. The short motif at 228-232 (KFGKT) is the 'KMSKS' region element. Lys231 contacts ATP. The region spanning 350–416 (KNIVDWLVDT…GKKNYFLAKV (67 aa)) is the S4 RNA-binding domain.

The protein belongs to the class-I aminoacyl-tRNA synthetase family. TyrS type 1 subfamily. In terms of assembly, homodimer.

The protein resides in the cytoplasm. It catalyses the reaction tRNA(Tyr) + L-tyrosine + ATP = L-tyrosyl-tRNA(Tyr) + AMP + diphosphate + H(+). Its function is as follows. Catalyzes the attachment of tyrosine to tRNA(Tyr) in a two-step reaction: tyrosine is first activated by ATP to form Tyr-AMP and then transferred to the acceptor end of tRNA(Tyr). The sequence is that of Tyrosine--tRNA ligase 1 from Enterococcus faecalis (strain ATCC 700802 / V583).